Reading from the N-terminus, the 208-residue chain is Pyridoxine/pyridoxamine 5'-phosphate oxidase (208 aa).

FMN is bound by residues 53-58, 68-69, Lys75, and Gln100; these read RTVLLK and YS. Lys58 is a binding site for substrate. Substrate is bound by residues Tyr118, Arg122, and Ser126. Residues 135–136 and Trp180 each bind FMN; that span reads QS. Residue 186 to 188 coordinates substrate; that stretch reads RLH. Position 190 (Arg190) interacts with FMN.

It belongs to the pyridoxamine 5'-phosphate oxidase family. As to quaternary structure, homodimer. FMN serves as cofactor.

The enzyme catalyses pyridoxamine 5'-phosphate + O2 + H2O = pyridoxal 5'-phosphate + H2O2 + NH4(+). It catalyses the reaction pyridoxine 5'-phosphate + O2 = pyridoxal 5'-phosphate + H2O2. It functions in the pathway cofactor metabolism; pyridoxal 5'-phosphate salvage; pyridoxal 5'-phosphate from pyridoxamine 5'-phosphate: step 1/1. The protein operates within cofactor metabolism; pyridoxal 5'-phosphate salvage; pyridoxal 5'-phosphate from pyridoxine 5'-phosphate: step 1/1. Catalyzes the oxidation of either pyridoxine 5'-phosphate (PNP) or pyridoxamine 5'-phosphate (PMP) into pyridoxal 5'-phosphate (PLP). The protein is Pyridoxine/pyridoxamine 5'-phosphate oxidase of Xylella fastidiosa (strain 9a5c).